A 239-amino-acid chain; its full sequence is Fatty acid metabolism regulator protein (239 aa).

The region spanning 6 to 74 is the HTH gntR-type domain; sequence QSPAGFAEEY…HGKPTKVNNF (69 aa). The H-T-H motif DNA-binding region spans 34–53; it reads ERELSELIGVTRTTLREVLQ.

Homodimer.

The protein localises to the cytoplasm. Functionally, multifunctional regulator of fatty acid metabolism. The polypeptide is Fatty acid metabolism regulator protein (Salmonella paratyphi C (strain RKS4594)).